The chain runs to 197 residues: UPF0200 protein MJ1399 (197 aa).

8 to 15 contributes to the ATP binding site; that stretch reads GMPGAGKS.

The protein belongs to the UPF0200 family.

This chain is UPF0200 protein MJ1399, found in Methanocaldococcus jannaschii (strain ATCC 43067 / DSM 2661 / JAL-1 / JCM 10045 / NBRC 100440) (Methanococcus jannaschii).